The following is a 142-amino-acid chain: MSNKHPLVQVIENAQLIERPSFAPGDTVVVQVKVREGERERLQAFEGVVIAKRNRGLNSAFTVRKISSGVGVERAFQLHSPIIDSIEVKRRGAVRRAKLYYLRERSGKSARIREKLAPRAPKVVKAKTDARVPDAVETAPGI.

The protein belongs to the bacterial ribosomal protein bL19 family.

This protein is located at the 30S-50S ribosomal subunit interface and may play a role in the structure and function of the aminoacyl-tRNA binding site. The polypeptide is Large ribosomal subunit protein bL19 (Psychrobacter cryohalolentis (strain ATCC BAA-1226 / DSM 17306 / VKM B-2378 / K5)).